Consider the following 694-residue polypeptide: Elongation factor G (694 aa).

The tr-type G domain maps to 8–284 (EKLRNIGIVA…AVIDFLPSPV (277 aa)). GTP contacts are provided by residues 17-24 (AHIDAGKT), 81-85 (DTPGH), and 135-138 (NKMD).

This sequence belongs to the TRAFAC class translation factor GTPase superfamily. Classic translation factor GTPase family. EF-G/EF-2 subfamily.

The protein localises to the cytoplasm. In terms of biological role, catalyzes the GTP-dependent ribosomal translocation step during translation elongation. During this step, the ribosome changes from the pre-translocational (PRE) to the post-translocational (POST) state as the newly formed A-site-bound peptidyl-tRNA and P-site-bound deacylated tRNA move to the P and E sites, respectively. Catalyzes the coordinated movement of the two tRNA molecules, the mRNA and conformational changes in the ribosome. The polypeptide is Elongation factor G (Persephonella marina (strain DSM 14350 / EX-H1)).